Here is a 398-residue protein sequence, read N- to C-terminus: Tryptophan synthase beta chain (398 aa).

An N6-(pyridoxal phosphate)lysine modification is found at K89.

This sequence belongs to the TrpB family. As to quaternary structure, tetramer of two alpha and two beta chains. Pyridoxal 5'-phosphate serves as cofactor.

The catalysed reaction is (1S,2R)-1-C-(indol-3-yl)glycerol 3-phosphate + L-serine = D-glyceraldehyde 3-phosphate + L-tryptophan + H2O. It participates in amino-acid biosynthesis; L-tryptophan biosynthesis; L-tryptophan from chorismate: step 5/5. In terms of biological role, the beta subunit is responsible for the synthesis of L-tryptophan from indole and L-serine. This Methanopyrus kandleri (strain AV19 / DSM 6324 / JCM 9639 / NBRC 100938) protein is Tryptophan synthase beta chain.